Reading from the N-terminus, the 535-residue chain is Calcium-dependent protein kinase 1 (535 aa).

Positions 1 to 34 (MGCNQSKSANDVRGNKVNNVNSKKKNNKREDIND) are disordered. The N-myristoyl glycine moiety is linked to residue Gly2. Cys3 carries S-palmitoyl cysteine lipidation. The region spanning 57 to 324 (YFKVRKLGSG…AEEALNSRWI (268 aa)) is the Protein kinase domain. ATP is bound by residues 63-71 (LGSGAYGEV) and Lys86. Residue Ser65 is modified to Phosphoserine. The residue at position 117 (Ser117) is a Phosphoserine. The active-site Proton acceptor is Asp190. 2 positions are modified to phosphoserine: Ser216 and Ser219. Thr230 is modified (phosphothreonine). The residue at position 334 (Ser334) is a Phosphoserine. Residues 345–352 (NMRKFEGS) carry the J domain autoinhibitory motif motif. Residues 345–363 (NMRKFEGSQKLAQAAILFI) are j domain. The J domain interacts with the EF-hand domains signature appears at 353 to 363 (QKLAQAAILFI). 4 consecutive EF-hand domains span residues 371–406 (EERKELTDIFKKLDKNGDGQLDKKELIEGYNVLRNF), 415–450 (NVEEEVDNILKEVDFDKNGYIEYSEFISVCMDKQIL), 451–486 (FSEERLRRAFNLFDTDKSGKITKEELANVIIRGFYF), and 497–532 (VSEKTWNDVLGEADQNKDNMIDFDEFVSMMHKICDN). Residues Asp384, Asn386, Asp388, Gln390, Glu395, Asp428, Asp430, Asn432, Tyr434, Glu439, Asp464, Asp466, Ser468, Lys470, Glu475, Asp510, Asn512, Asp514, Met516, and Glu521 each contribute to the Ca(2+) site.

The protein belongs to the protein kinase superfamily. Ser/Thr protein kinase family. CDPK subfamily. As to quaternary structure, monomer. Mg(2+) is required as a cofactor. Post-translationally, myristoylated. Myristoylation and palmitoylation are required for the localization to the parasitophorous vacuole membrane. In terms of processing, palmitoylated. Palmitoylation increases in merozoites in response to low level of extracellular K(+) in the host blood. Myristoylation and palmitoylation are required for the localization to the parasitophorous vacuole membrane. Phosphorylation at Thr-230 may regulate CDPK1 kinase activity. Phosphorylation increases in response to an increase in intracellular Ca(2+) levels. Autophosphorylated in vitro. Autophosphorylation does not affect membrane localization in vitro.

It localises to the membrane. The protein localises to the cell membrane. Its subcellular location is the parasitophorous vacuole membrane. The protein resides in the cytoplasm. It is found in the cell projection. It localises to the cilium. The protein localises to the flagellum. Its subcellular location is the host cell membrane. It carries out the reaction L-seryl-[protein] + ATP = O-phospho-L-seryl-[protein] + ADP + H(+). The enzyme catalyses L-threonyl-[protein] + ATP = O-phospho-L-threonyl-[protein] + ADP + H(+). Its activity is regulated as follows. Activated by calcium. Upon calcium binding to the EF-hand domains, the C-terminus of the junction domain (J domain) undergoes a conformational change which results in the dissociation of the pseudo-substrate inhibitory motif from the catalytic domain. This, in turn may facilitate the autophosphorylation of the activation loop at Thr-230, which leads to the kinase activation. Calcium-dependent protein kinase which acts as a sensor and effector of intracellular Ca(2+) levels probably in part downstream of cGMP-activated PKG kinase. During the liver stage, involved in sporozoite motility and thus in sporozoite invasion of host hepatocytes, probably together with CDPK4 and CDPK5. In the mosquito midgut and during the last stage of male gamete exflagellation, may play a role in the rupture of the host erythrocyte membrane. In the mosquito midgut, required for the differentiation of the zygote into the ookinete by promoting the translational activation of a subset of repressed mRNAs; these mRNAs are kept repressed in the zygote by the DOZI- or CITH-containing mRNP complexes. Dispensable during the asexual blood stage. The chain is Calcium-dependent protein kinase 1 from Plasmodium yoelii yoelii.